Reading from the N-terminus, the 340-residue chain is GTPase Obg (340 aa).

One can recognise an Obg domain in the interval 1 to 158 (MSFIDEAKVY…KYITLKLKII (158 aa)). In terms of domain architecture, OBG-type G spans 159–325 (SDIGIIGLPN…LSTLIQYIHK (167 aa)). Residues 165–172 (GLPNAGKS), 190–194 (FTTLE), 211–214 (DIPG), 278–281 (NKSD), and 306–308 (SSI) contribute to the GTP site. Mg(2+) contacts are provided by S172 and T192.

The protein belongs to the TRAFAC class OBG-HflX-like GTPase superfamily. OBG GTPase family. As to quaternary structure, monomer. The cofactor is Mg(2+).

Its subcellular location is the cytoplasm. An essential GTPase which binds GTP, GDP and possibly (p)ppGpp with moderate affinity, with high nucleotide exchange rates and a fairly low GTP hydrolysis rate. Plays a role in control of the cell cycle, stress response, ribosome biogenesis and in those bacteria that undergo differentiation, in morphogenesis control. This chain is GTPase Obg, found in Ehrlichia chaffeensis (strain ATCC CRL-10679 / Arkansas).